We begin with the raw amino-acid sequence, 114 residues long: MLSTRIQCALALLSLALAVCSVSAAPTDAKLRQLLQRSLLNPAGKQELARYTLADLLSELVQAENEALEPEDLSRAVEKDEVRLELERAAGPMLAPRERKAGCKNFFWKTFTSC.

An N-terminal signal peptide occupies residues 1–24 (MLSTRIQCALALLSLALAVCSVSA). A propeptide spanning residues 25–88 (APTDAKLRQL…KDEVRLELER (64 aa)) is cleaved from the precursor. A disulfide bridge links Cys103 with Cys114.

Belongs to the somatostatin family.

The protein resides in the secreted. In terms of biological role, somatostatin inhibits the release of somatotropin. The polypeptide is Somatostatin-1A (sst1a) (Carassius auratus (Goldfish)).